Reading from the N-terminus, the 233-residue chain is Large ribosomal subunit protein uL1 (233 aa).

The protein belongs to the universal ribosomal protein uL1 family. As to quaternary structure, part of the 50S ribosomal subunit.

Functionally, binds directly to 23S rRNA. The L1 stalk is quite mobile in the ribosome, and is involved in E site tRNA release. Its function is as follows. Protein L1 is also a translational repressor protein, it controls the translation of the L11 operon by binding to its mRNA. In Pelobacter propionicus (strain DSM 2379 / NBRC 103807 / OttBd1), this protein is Large ribosomal subunit protein uL1.